The chain runs to 377 residues: DAR GTPase 2, mitochondrial (377 aa).

Residues 1–21 (MATAKTWKIAREIGDAVIKAS) constitute a mitochondrion transit peptide. In terms of domain architecture, CP-type G spans 34 to 211 (AAAVRAISER…VLDTPGIFPP (178 aa)). The DARXP motif motif lies at 55–59 (DARIP). Residues 82–85 (NKME), 110–111 (NS), 150–155 (NVGKSA), and Gly-207 contribute to the GTP site.

It belongs to the TRAFAC class YlqF/YawG GTPase family. MTG1 subfamily.

The protein resides in the mitochondrion. In terms of biological role, GTPase that may function in mitochondrial ribosome assembly. This chain is DAR GTPase 2, mitochondrial, found in Arabidopsis thaliana (Mouse-ear cress).